A 112-amino-acid polypeptide reads, in one-letter code: UPF0145 protein RB3016 (112 aa).

This sequence belongs to the UPF0145 family.

This Rhodopirellula baltica (strain DSM 10527 / NCIMB 13988 / SH1) protein is UPF0145 protein RB3016.